The following is a 597-amino-acid chain: Lipoprotein LpqB (597 aa).

The first 28 residues, 1–28 (MTPGRRSALLSRSVCGAIVLAVLVTVSG), serve as a signal peptide directing secretion. A lipid anchor (N-palmitoyl cysteine) is attached at Cys29. Cys29 is lipidated: S-diacylglycerol cysteine. Residues 38-51 (PQAIGTINRDSPGS) show a composition bias toward polar residues. Residues 38 to 58 (PQAIGTINRDSPGSSVAAPAP) form a disordered region.

This sequence belongs to the LpqB lipoprotein family.

It is found in the cell membrane. The polypeptide is Lipoprotein LpqB (Rhodococcus jostii (strain RHA1)).